A 623-amino-acid chain; its full sequence is uncharacterized protein (623 aa).

5 helical membrane passes run 242-262 (IVLA…ITWL), 288-308 (IVSP…LDIF), 318-338 (VSMW…IALF), 361-381 (VINL…LLGV), and 387-407 (FNVS…ALAV).

This sequence belongs to the MscS (TC 1.A.23) family.

The protein resides in the cell membrane. This is an uncharacterized protein from Helicobacter pylori (strain ATCC 700392 / 26695) (Campylobacter pylori).